A 218-amino-acid polypeptide reads, in one-letter code: MNVNIDSEQLFTEEKPKDYAQPEVLCHTFELLSNLHKLLPNRTVEVLHSYRSEEDKRKCEKPEFSGRKILARHQLPKEINLSPKPSHVPSWKRKIINNISGNWKKCRLWQKSIYEPPMGTIIVRWTKKNLQPSEDLKSVIQRLSALGPIISVTPCGRESAVVVFRDAASACKAVSAFQTMSADSMFHCSWQHRFMSKNKTWSRRYPSKIHAEKKEKHP.

In Rattus norvegicus (Rat), this protein is Testis expressed protein 56 (Tex56).